The sequence spans 269 residues: Eukaryotic translation initiation factor 3 subunit G-1 (269 aa).

The 79-residue stretch at 188 to 266 folds into the RRM domain; the sequence is AAIRISNLSE…LILSVEWSKP (79 aa).

This sequence belongs to the eIF-3 subunit G family. As to quaternary structure, component of the eukaryotic translation initiation factor 3 (eIF-3) complex. The eIF-3 complex interacts with pix.

It localises to the cytoplasm. In terms of biological role, RNA-binding component of the eukaryotic translation initiation factor 3 (eIF-3) complex, which is involved in protein synthesis of a specialized repertoire of mRNAs and, together with other initiation factors, stimulates binding of mRNA and methionyl-tRNAi to the 40S ribosome. The eIF-3 complex specifically targets and initiates translation of a subset of mRNAs involved in cell proliferation. This subunit can bind 18S rRNA. In Drosophila mojavensis (Fruit fly), this protein is Eukaryotic translation initiation factor 3 subunit G-1.